The following is a 391-amino-acid chain: MIGTPYTEGARRAMLLGCGELGKEVAIELQRLGVEVIGVDRYANAPAMQVAHRSHVINMLDAKALRAIIELEKPHLVIPEIEAIATQTLVEMEAEGVNIIPTARATKLTMDREGIRRLAAETLGLPTSPYFFCDTETEFNQAIREIGVPCVVKPVMSSSGKGQSVIRDIALSHKAWQYAQEGGRAGGGRVIVEGFVPFDYEITLLTVSAVNGIHFCAPIGHRQEDGDYRESWQPQAMSDEVLAKSQAIASKVVEALGGYGLFGVELFVKGHEVYFSEVSPRPHDTGLVTLISQDLSEFALHVRAILGLPIPNIHQHGPSASAVILAEGTSSNIRYQGIGAALEAVNTQLRLFAKPDIDGRRRLGVALARDIDIDSAISKALDSASKVKVIF.

N(1)-(5-phospho-beta-D-ribosyl)glycinamide is bound by residues glutamate 20–leucine 21 and glutamate 80. ATP contacts are provided by residues arginine 112, lysine 153, serine 158–glutamine 163, glutamate 193–valine 196, and glutamate 201. In terms of domain architecture, ATP-grasp spans arginine 117–leucine 306. 2 residues coordinate Mg(2+): glutamate 265 and glutamate 277. N(1)-(5-phospho-beta-D-ribosyl)glycinamide is bound by residues aspartate 284, lysine 354, and arginine 361–arginine 362.

The protein belongs to the PurK/PurT family. In terms of assembly, homodimer.

The catalysed reaction is N(1)-(5-phospho-beta-D-ribosyl)glycinamide + formate + ATP = N(2)-formyl-N(1)-(5-phospho-beta-D-ribosyl)glycinamide + ADP + phosphate + H(+). It functions in the pathway purine metabolism; IMP biosynthesis via de novo pathway; N(2)-formyl-N(1)-(5-phospho-D-ribosyl)glycinamide from N(1)-(5-phospho-D-ribosyl)glycinamide (formate route): step 1/1. Involved in the de novo purine biosynthesis. Catalyzes the transfer of formate to 5-phospho-ribosyl-glycinamide (GAR), producing 5-phospho-ribosyl-N-formylglycinamide (FGAR). Formate is provided by PurU via hydrolysis of 10-formyl-tetrahydrofolate. This chain is Formate-dependent phosphoribosylglycinamide formyltransferase, found in Shewanella putrefaciens (strain CN-32 / ATCC BAA-453).